Reading from the N-terminus, the 292-residue chain is MELGMFRLNIYQPGGPIGALYPVEKILYHGRSQYQEIMILVLRGFGKTLVLDGLIQSTESDEHIYHETLVHPAMTVHPNPRRVLILGGGEGATLREVLKHNTVEKAVMVDIDGEVVRVAREYLPEWHQGAFDDPRAQVVIMDGFEYIKEAARRGEDFDVIIMDLTDPFGPKIAAKLYTKEAIGLVKSVLRSDGILVTQAGCAALFPEAFEKVYGSVKSLFAHAEEYGVWVPSFMYVNSFVFASDKYRLTDLSMEEVDRRLRERGVETRFYSGLRHYTLIGLGGIRLLEGRGS.

A PABS domain is found at 1-244; sequence MELGMFRLNI…YVNSFVFASD (244 aa). Glutamine 35 is a binding site for S-methyl-5'-thioadenosine. Spermidine contacts are provided by histidine 66 and glutamate 90. S-methyl-5'-thioadenosine contacts are provided by residues aspartate 110 and 142–143; that span reads DG. Residue aspartate 163 is the Proton acceptor of the active site.

It belongs to the spermidine/spermine synthase family. As to quaternary structure, homodimer or homotetramer.

It localises to the cytoplasm. It carries out the reaction norspermine + S-adenosyl 3-(methylsulfanyl)propylamine = caldopentamine + S-methyl-5'-thioadenosine + 2 H(+). The catalysed reaction is norspermidine + S-adenosyl 3-(methylsulfanyl)propylamine = norspermine + S-methyl-5'-thioadenosine + H(+). It catalyses the reaction S-adenosyl 3-(methylsulfanyl)propylamine + spermidine = thermospermine + S-methyl-5'-thioadenosine + H(+). Involved in the biosynthesis of polyamines which are thought to support the growth of thermophilic microorganisms under high-temperature conditions. It seems that long-chain and branched-chain of polyamines effectively stabilize DNA and RNA, respectively. Catalyzes the irreversible transfer of a propylamine group from the amino donor S-adenosylmethioninamine (decarboxy-AdoMet) to norspermidine, spermidine and norspermine to yield norspermine, thermospermine and caldopentamine, respectively. It can also synthesize sym-norspermidine (bis(3-aminopropyl)amine) from 1,3-diaminopropane with a very low activity. The biosynthesis of caldohexamine and caldoheptamine from caldopentamine has been also observed. The sequence is that of Polyamine aminopropyltransferase 1 from Hyperthermus butylicus (strain DSM 5456 / JCM 9403 / PLM1-5).